A 449-amino-acid chain; its full sequence is C4-dicarboxylate transport protein (449 aa).

The next 8 membrane-spanning stretches (helical) occupy residues 18–38 (PFYL…ALLG), 61–81 (MIIS…VAHV), 93–113 (VYFL…AHVV), 159–179 (FVGD…IALA), 202–222 (LVQM…AFTI), 244–264 (SLLF…FSIL), 311–331 (GYSF…LFIA), and 369–389 (AATL…ILGV).

It belongs to the dicarboxylate/amino acid:cation symporter (DAACS) (TC 2.A.23) family.

It is found in the cell inner membrane. Its function is as follows. Responsible for the transport of dicarboxylates such as succinate, fumarate, and malate from the periplasm across the membrane. The polypeptide is C4-dicarboxylate transport protein (Xylella fastidiosa (strain M12)).